The following is a 155-amino-acid chain: Endoribonuclease YbeY (155 aa).

Zn(2+) is bound by residues His114, His118, and His124.

This sequence belongs to the endoribonuclease YbeY family. It depends on Zn(2+) as a cofactor.

The protein localises to the cytoplasm. Functionally, single strand-specific metallo-endoribonuclease involved in late-stage 70S ribosome quality control and in maturation of the 3' terminus of the 16S rRNA. This is Endoribonuclease YbeY from Enterobacter sp. (strain 638).